Here is a 453-residue protein sequence, read N- to C-terminus: UDP-N-acetylmuramate--L-alanine ligase (453 aa).

Position 112-118 (112-118 (GTHGKTT)) interacts with ATP.

This sequence belongs to the MurCDEF family.

The protein localises to the cytoplasm. The catalysed reaction is UDP-N-acetyl-alpha-D-muramate + L-alanine + ATP = UDP-N-acetyl-alpha-D-muramoyl-L-alanine + ADP + phosphate + H(+). It functions in the pathway cell wall biogenesis; peptidoglycan biosynthesis. Its function is as follows. Cell wall formation. This is UDP-N-acetylmuramate--L-alanine ligase from Bdellovibrio bacteriovorus (strain ATCC 15356 / DSM 50701 / NCIMB 9529 / HD100).